The sequence spans 459 residues: ATP-dependent protease ATPase subunit HslU (459 aa).

ATP-binding positions include Val18, Gly60–Glu65, Asp272, Glu337, and Arg409.

Belongs to the ClpX chaperone family. HslU subfamily. As to quaternary structure, a double ring-shaped homohexamer of HslV is capped on each side by a ring-shaped HslU homohexamer. The assembly of the HslU/HslV complex is dependent on binding of ATP.

It is found in the cytoplasm. In terms of biological role, ATPase subunit of a proteasome-like degradation complex; this subunit has chaperone activity. The binding of ATP and its subsequent hydrolysis by HslU are essential for unfolding of protein substrates subsequently hydrolyzed by HslV. HslU recognizes the N-terminal part of its protein substrates and unfolds these before they are guided to HslV for hydrolysis. In Thermoanaerobacter sp. (strain X514), this protein is ATP-dependent protease ATPase subunit HslU.